Here is a 626-residue protein sequence, read N- to C-terminus: Forkhead box protein O1 (626 aa).

Positions 1–11 are enriched in pro residues; sequence MAEAPLPPPPG. Disordered regions lie at residues 1 to 57, 90 to 142, 218 to 319, and 484 to 519; these read MAEA…PAAG, DIRQ…SRRN, SSWW…MPEQ, and PTYG…MTHN. Low complexity-rich tracts occupy residues 37–48 and 101–133; these read NPSSSANSSPAP and QHPQ…AQQP. The fork-head DNA-binding region spans 144–238; the sequence is WGNLSYADLI…KNGKSPRRRA (95 aa). Residues 248-259 are compositionally biased toward basic residues; that stretch reads AKSRGRAAKKKA. Positions 262 to 277 are enriched in low complexity; sequence QSSQDGSSDSPGSQFS. 2 stretches are compositionally biased toward polar residues: residues 298–310 and 484–494; these read RPRT…TISG and PTYGSQPTHNK.

Post-translationally, phosphorylated by AKT1; insulin-induced. IGF1 rapidly induces phosphorylation of Thr-28, Ser-240 and Ser-303. Phosphorylation of Ser-240 decreases DNA-binding activity and promotes the phosphorylation of Thr-28, and Ser-303, which leads to nuclear exclusion and loss of function. Phosphorylation of Ser-313 is independent of IGF1 and leads to reduced function.

It is found in the cytoplasm. It localises to the nucleus. Transcription factor that regulates metabolic homeostasis in response to oxidative stress. Binds to the consensus sequence 5'-TT[G/A]TTTTG-3' and the related Daf-16 family binding element (DBE) with consensus sequence 5'-TT[G/A]TTTAC-3'. Main regulator of redox balance and osteoblast numbers and controls bone mass. Orchestrates the endocrine function of the skeleton in regulating glucose metabolism. Also acts as a key regulator of chondrogenic commitment of skeletal progenitor cells in response to lipid availability: when lipids levels are low, translocates to the nucleus and promotes expression of sox9, which induces chondrogenic commitment and suppresses fatty acid oxidation. Acts synergistically with atf4 to suppress osteocalcin/bglap activity, increasing glucose levels and triggering glucose intolerance and insulin insensitivity. Also suppresses the transcriptional activity of runx2, an upstream activator of osteocalcin/bglap. May act as a positive regulator of apoptosis in cardiac smooth muscle cells as a result of its transcriptional activation of pro-apoptotic genes. The sequence is that of Forkhead box protein O1 from Xenopus tropicalis (Western clawed frog).